Consider the following 248-residue polypeptide: MQTIALAVIGGTGVYTLSQFDDVQVYEVETLYGRPSGPIRVGMLFGQRVAFFARHGEEHALPPHKINYRANIAALQQLGVSRVLALNTVGGINEAFGPRTLVCPDQLIDYTWGRVSTFCEEVGSEVLHVDFGHPYSPLLRGCLLRAARDVDVSLVEYGCYGVTQGPRLETIAEIDRLRRDGCDLVGMTGMPEAALAREKGLEYACLGIVSNWAAGCGDGAEITMGEILSNVATAFSCLPELISKVARE.

Residues T12 and 54–55 contribute to the phosphate site; that span reads RH. M187 is a substrate binding site. Position 188 (T188) interacts with phosphate. Substrate is bound at residue 211 to 213; the sequence is NWA.

The protein belongs to the PNP/MTAP phosphorylase family. MTAP subfamily. In terms of assembly, homotrimer.

It carries out the reaction S-methyl-5'-thioinosine + phosphate = 5-(methylsulfanyl)-alpha-D-ribose 1-phosphate + hypoxanthine. It participates in purine metabolism; purine nucleoside salvage. Functionally, catalyzes the reversible phosphorylation of S-methyl-5'-thioinosine (MTI) to hypoxanthine and 5-methylthioribose-1-phosphate. Involved in the breakdown of S-methyl-5'-thioadenosine (MTA), a major by-product of polyamine biosynthesis. Catabolism of (MTA) occurs via deamination to MTI and phosphorolysis to hypoxanthine. This Xylella fastidiosa (strain Temecula1 / ATCC 700964) protein is Probable S-methyl-5'-thioinosine phosphorylase.